We begin with the raw amino-acid sequence, 503 residues long: MDFSIKGCDWSKGEAKGFLTGKSDCIVLGIFEAQTLSGAALDIDTATKGLISRVVKAGDMDGKRGKTLFLHEVSGIGASRVLLVGLGKQDAFNQKAYNDAVTAAWRALLATKVVQVTFSLAQLPVDERSSDWGVRAAILALRNETYRFTQMKSKPEPASHTLKRVVFSVDPADEKAAKVAVKQAVALANGMDLTRDLGNLPGNVCTPTYLGNTAKKIAKDWGLKAEVLGLKQIQALKMGSFLSVARASVEPPQFIVLHYQGAAAKAAPVVLVGKGITFDTGGISLKPGEGMDEMKYDMCGAGSVLGTIRAVAEMGLKINVVAIVPTCENMPGGNATKPGDIVTSMKGLTIEVLNTDAEGRLILCDALTYAERFKPAAVIDVATLTGACVIALGGHNSGLFSTNDALAGELLDASREANDPAWRMPLDDEYQDQLKSNFADLANIGGRPAGAVTAACFLSRFTESYPWAHLDIAGTAWKGGAAKGATGRPVPLLAQFLIDRAGQ.

The Mn(2+) site is built by Lys274 and Asp279. The active site involves Lys286. Asp297, Asp356, and Glu358 together coordinate Mn(2+). Arg360 is an active-site residue.

This sequence belongs to the peptidase M17 family. Mn(2+) serves as cofactor.

It localises to the cytoplasm. It carries out the reaction Release of an N-terminal amino acid, Xaa-|-Yaa-, in which Xaa is preferably Leu, but may be other amino acids including Pro although not Arg or Lys, and Yaa may be Pro. Amino acid amides and methyl esters are also readily hydrolyzed, but rates on arylamides are exceedingly low.. It catalyses the reaction Release of an N-terminal amino acid, preferentially leucine, but not glutamic or aspartic acids.. In terms of biological role, presumably involved in the processing and regular turnover of intracellular proteins. Catalyzes the removal of unsubstituted N-terminal amino acids from various peptides. This Burkholderia cenocepacia (strain ATCC BAA-245 / DSM 16553 / LMG 16656 / NCTC 13227 / J2315 / CF5610) (Burkholderia cepacia (strain J2315)) protein is Probable cytosol aminopeptidase.